The sequence spans 354 residues: UDP-N-acetylglucosamine--N-acetylmuramyl-(pentapeptide) pyrophosphoryl-undecaprenol N-acetylglucosamine transferase (354 aa).

UDP-N-acetyl-alpha-D-glucosamine contacts are provided by residues 15 to 17 (TGG), Asn-127, Arg-163, Ser-191, Ile-242, 261 to 266 (ALTVSE), and Gln-286.

This sequence belongs to the glycosyltransferase 28 family. MurG subfamily.

It localises to the cell inner membrane. The catalysed reaction is di-trans,octa-cis-undecaprenyl diphospho-N-acetyl-alpha-D-muramoyl-L-alanyl-D-glutamyl-meso-2,6-diaminopimeloyl-D-alanyl-D-alanine + UDP-N-acetyl-alpha-D-glucosamine = di-trans,octa-cis-undecaprenyl diphospho-[N-acetyl-alpha-D-glucosaminyl-(1-&gt;4)]-N-acetyl-alpha-D-muramoyl-L-alanyl-D-glutamyl-meso-2,6-diaminopimeloyl-D-alanyl-D-alanine + UDP + H(+). The protein operates within cell wall biogenesis; peptidoglycan biosynthesis. Functionally, cell wall formation. Catalyzes the transfer of a GlcNAc subunit on undecaprenyl-pyrophosphoryl-MurNAc-pentapeptide (lipid intermediate I) to form undecaprenyl-pyrophosphoryl-MurNAc-(pentapeptide)GlcNAc (lipid intermediate II). In Pasteurella multocida (strain Pm70), this protein is UDP-N-acetylglucosamine--N-acetylmuramyl-(pentapeptide) pyrophosphoryl-undecaprenol N-acetylglucosamine transferase.